Here is an 89-residue protein sequence, read N- to C-terminus: MSLNAETKAAIVAEYAQCENDTGSPEVQVALLTASINHLQGHFANHKHDHHSRRGLLRMVSSRRKLLDYLKGKNSTRYQDLIKRLGLRR.

It belongs to the universal ribosomal protein uS15 family. Part of the 30S ribosomal subunit. Forms a bridge to the 50S subunit in the 70S ribosome, contacting the 23S rRNA.

In terms of biological role, one of the primary rRNA binding proteins, it binds directly to 16S rRNA where it helps nucleate assembly of the platform of the 30S subunit by binding and bridging several RNA helices of the 16S rRNA. Forms an intersubunit bridge (bridge B4) with the 23S rRNA of the 50S subunit in the ribosome. This chain is Small ribosomal subunit protein uS15, found in Aliivibrio salmonicida (strain LFI1238) (Vibrio salmonicida (strain LFI1238)).